Here is a 481-residue protein sequence, read N- to C-terminus: UDP-N-acetylmuramate--L-alanine ligase (481 aa).

126–132 (GTHGKTT) contributes to the ATP binding site.

The protein belongs to the MurCDEF family.

Its subcellular location is the cytoplasm. The enzyme catalyses UDP-N-acetyl-alpha-D-muramate + L-alanine + ATP = UDP-N-acetyl-alpha-D-muramoyl-L-alanine + ADP + phosphate + H(+). Its pathway is cell wall biogenesis; peptidoglycan biosynthesis. Its function is as follows. Cell wall formation. The polypeptide is UDP-N-acetylmuramate--L-alanine ligase (Marinobacter nauticus (strain ATCC 700491 / DSM 11845 / VT8) (Marinobacter aquaeolei)).